The primary structure comprises 279 residues: Shikimate dehydrogenase (NADP(+)) (279 aa).

Residues 19–21 (SFS) and Thr66 contribute to the shikimate site. Lys70 (proton acceptor) is an active-site residue. Glu82 provides a ligand contact to NADP(+). Shikimate-binding residues include Asn91 and Asp106. NADP(+)-binding positions include 130-134 (GSGGA) and Leu222. Residue Tyr224 coordinates shikimate. An NADP(+)-binding site is contributed by Gly245.

The protein belongs to the shikimate dehydrogenase family. As to quaternary structure, homodimer.

The catalysed reaction is shikimate + NADP(+) = 3-dehydroshikimate + NADPH + H(+). Its pathway is metabolic intermediate biosynthesis; chorismate biosynthesis; chorismate from D-erythrose 4-phosphate and phosphoenolpyruvate: step 4/7. Its function is as follows. Involved in the biosynthesis of the chorismate, which leads to the biosynthesis of aromatic amino acids. Catalyzes the reversible NADPH linked reduction of 3-dehydroshikimate (DHSA) to yield shikimate (SA). The sequence is that of Shikimate dehydrogenase (NADP(+)) from Methanococcus maripaludis (strain C6 / ATCC BAA-1332).